Consider the following 356-residue polypeptide: CLIP domain-containing serine protease C9 (356 aa).

The Clip domain maps to 49 to 94 (SCDTPQVIGGKCMNISLCDPAFVHSIAYQEHTPVCQQNAFYRVICC). Cystine bridges form between cysteine 50–cysteine 93, cysteine 60–cysteine 83, cysteine 66–cysteine 94, and cysteine 139–cysteine 155. Asparagine 62 is a glycosylation site (N-linked (GlcNAc...) asparagine). The 243-residue stretch at 109 to 351 (IMHGIEAEPG…YFGWIKETVS (243 aa)) folds into the Peptidase S1 domain. Active-site charge relay system residues include histidine 154 and aspartate 194. Cysteine 258 and cysteine 284 are joined by a disulfide. The N-linked (GlcNAc...) asparagine glycan is linked to asparagine 292. Cysteine 300 and cysteine 328 form a disulfide bridge. The active-site Charge relay system is the serine 304.

Belongs to the peptidase S1 family. CLIP subfamily. As to quaternary structure, in the active form, heterodimer of a p12 subunit and a p30 subunit; disulfide-linked. Secreted as a full-length protein. Following bacterium E.coli infection, proteolytically cleaved into two chains, p12 and p30, which remain covalently linked.

It is found in the secreted. In terms of biological role, probable serine protease which plays an essential role in the innate immune response against bacteria and protozoa infection by activating the melanization cascade. In the susceptible strain G3, appears to be dispensable for ookinete elimination which occurs by lysis. This Anopheles gambiae (African malaria mosquito) protein is CLIP domain-containing serine protease C9.